Here is a 666-residue protein sequence, read N- to C-terminus: Calcium/calmodulin-dependent protein kinase type II subunit beta (666 aa).

A Protein kinase domain is found at 14-272 (YQLYEDIGKG…AHEALKHPWV (259 aa)). Tyr-17 is subject to Phosphotyrosine. Residues 20–28 (IGKGAFSVV) and Lys-43 contribute to the ATP site. The active-site Proton acceptor is the Asp-136. The tract at residues 283–292 (HRQETVECLK) is autoinhibitory domain. Thr-287 carries the post-translational modification Phosphothreonine; by autocatalysis. Positions 291–301 (LKKFNARRKLK) are calmodulin-binding. Phosphothreonine; by autocatalysis occurs at positions 306 and 307. The segment at 349-534 (ADGVKPQTNS…IPGPLPTPSR (186 aa)) is disordered. Polar residues predominate over residues 354–369 (PQTNSTKNSAAATSPK). Ser-367, Ser-394, and Ser-397 each carry phosphoserine. Phosphothreonine occurs at positions 400 and 401. Residues 432–447 (LPCPSPAPFSPLPAPS) show a composition bias toward pro residues. The segment covering 479 to 491 (SPALLGPLSSPSP) has biased composition (low complexity). The span at 514-531 (PVGPPPCPSPTIPGPLPT) shows a compositional bias: pro residues.

This sequence belongs to the protein kinase superfamily. CAMK Ser/Thr protein kinase family. CaMK subfamily. As to quaternary structure, CAMK2 is composed of 4 different chains: alpha (CAMK2A), beta (CAMK2B), gamma (CAMK2G), and delta (CAMK2D). The different isoforms assemble into homo- or heteromultimeric holoenzymes composed of 12 subunits with two hexameric rings stacked one on top of the other. Interacts with SYNGAP1 and CAMK2N2. Interacts with MPDZ. Interacts with FOXO3. Interacts (when in a kinase inactive state not associated with calmodulin) with ARC; leading to target ARC to inactive synapses. Interacts with CAMK2N1; this interaction requires CAMK2B activation by Ca(2+). In terms of processing, autophosphorylation of Thr-287 following activation by Ca(2+)/calmodulin. Phosphorylation of Thr-287 locks the kinase into an activated state. Widely expressed. Expressed in adult and fetal brain. Expression is slightly lower in fetal brain. Expressed in skeletal muscle.

It is found in the cytoplasm. It localises to the cytoskeleton. The protein resides in the microtubule organizing center. Its subcellular location is the centrosome. The protein localises to the sarcoplasmic reticulum membrane. It is found in the synapse. It catalyses the reaction L-seryl-[protein] + ATP = O-phospho-L-seryl-[protein] + ADP + H(+). The catalysed reaction is L-threonyl-[protein] + ATP = O-phospho-L-threonyl-[protein] + ADP + H(+). With respect to regulation, activated by Ca(2+)/calmodulin. Binding of calmodulin results in conformational change that relieves intrasteric autoinhibition and allows autophosphorylation of Thr-287 which turns the kinase in a constitutively active form and confers to the kinase a Ca(2+)-independent activity. In terms of biological role, calcium/calmodulin-dependent protein kinase that functions autonomously after Ca(2+)/calmodulin-binding and autophosphorylation, and is involved in dendritic spine and synapse formation, neuronal plasticity and regulation of sarcoplasmic reticulum Ca(2+) transport in skeletal muscle. In neurons, plays an essential structural role in the reorganization of the actin cytoskeleton during plasticity by binding and bundling actin filaments in a kinase-independent manner. This structural function is required for correct targeting of CaMK2A, which acts downstream of NMDAR to promote dendritic spine and synapse formation and maintain synaptic plasticity which enables long-term potentiation (LTP) and hippocampus-dependent learning. In developing hippocampal neurons, promotes arborization of the dendritic tree and in mature neurons, promotes dendritic remodeling. Also regulates the migration of developing neurons. Participates in the modulation of skeletal muscle function in response to exercise. In slow-twitch muscles, is involved in regulation of sarcoplasmic reticulum (SR) Ca(2+) transport and in fast-twitch muscle participates in the control of Ca(2+) release from the SR through phosphorylation of triadin, a ryanodine receptor-coupling factor, and phospholamban (PLN/PLB), an endogenous inhibitor of SERCA2A/ATP2A2. In response to interferon-gamma (IFN-gamma) stimulation, catalyzes phosphorylation of STAT1, stimulating the JAK-STAT signaling pathway. Phosphorylates reticulophagy regulator RETREG1 at 'Ser-151' under endoplasmic reticulum stress conditions which enhances RETREG1 oligomerization and its membrane scission and reticulophagy activity. The sequence is that of Calcium/calmodulin-dependent protein kinase type II subunit beta (CAMK2B) from Homo sapiens (Human).